Consider the following 143-residue polypeptide: Peptide methionine sulfoxide reductase MsrB (143 aa).

In terms of domain architecture, MsrB spans 16 to 139 (DAELRRRLTP…NSAALNFESR (124 aa)). Zn(2+) contacts are provided by Cys-55, Cys-58, Cys-104, and Cys-107. The active-site Nucleophile is Cys-128.

This sequence belongs to the MsrB Met sulfoxide reductase family. The cofactor is Zn(2+).

The enzyme catalyses L-methionyl-[protein] + [thioredoxin]-disulfide + H2O = L-methionyl-(R)-S-oxide-[protein] + [thioredoxin]-dithiol. The chain is Peptide methionine sulfoxide reductase MsrB from Burkholderia lata (strain ATCC 17760 / DSM 23089 / LMG 22485 / NCIMB 9086 / R18194 / 383).